A 186-amino-acid chain; its full sequence is Translation initiation factor IF-3 (186 aa).

It belongs to the IF-3 family. In terms of assembly, monomer.

Its subcellular location is the cytoplasm. Functionally, IF-3 binds to the 30S ribosomal subunit and shifts the equilibrium between 70S ribosomes and their 50S and 30S subunits in favor of the free subunits, thus enhancing the availability of 30S subunits on which protein synthesis initiation begins. This is Translation initiation factor IF-3 from Chlamydia muridarum (strain MoPn / Nigg).